The following is a 236-amino-acid chain: Lectin alpha chain (236 aa).

Glutamate 8 and aspartate 10 together coordinate Mn(2+). Ca(2+) contacts are provided by aspartate 10, tyrosine 12, asparagine 14, and aspartate 19. Tyrosine 12 is a binding site for a carbohydrate. The Mn(2+) site is built by aspartate 19, histidine 24, and serine 34. Position 99–100 (99–100) interacts with a carbohydrate; the sequence is LY. A Ca(2+)-binding site is contributed by aspartate 207. A carbohydrate is bound at residue arginine 227.

Belongs to the leguminous lectin family. As to quaternary structure, equilibrium between homodimer and homotetramer. Oligomerization is pH-dependent with homotetramers forming at pH 6.5 and above. The beta and gamma chains are produced by partial proteolytic processing of the lectin alpha chain by an asparaginyl endopeptidase. Mixture of 60% alpha lectin and 40% of its beta and gamma proteolytic fragments. Seed.

Functionally, D-mannose/D-glucose-binding lectin. Has anti-inflammatory activity in rats. Induces histamine release in mast cells from rat. Induces lymphocyte proliferation and IFNG production. This is Lectin alpha chain from Cratylia argentea (Cratylia floribunda).